A 430-amino-acid polypeptide reads, in one-letter code: Enolase (430 aa).

Glutamine 164 is a binding site for (2R)-2-phosphoglycerate. The active-site Proton donor is the glutamate 208. 3 residues coordinate Mg(2+): aspartate 245, glutamate 288, and aspartate 315. Lysine 340, arginine 369, serine 370, and lysine 391 together coordinate (2R)-2-phosphoglycerate. Lysine 340 acts as the Proton acceptor in catalysis.

It belongs to the enolase family. It depends on Mg(2+) as a cofactor.

The protein resides in the cytoplasm. Its subcellular location is the secreted. It localises to the cell surface. The enzyme catalyses (2R)-2-phosphoglycerate = phosphoenolpyruvate + H2O. Its pathway is carbohydrate degradation; glycolysis; pyruvate from D-glyceraldehyde 3-phosphate: step 4/5. Catalyzes the reversible conversion of 2-phosphoglycerate (2-PG) into phosphoenolpyruvate (PEP). It is essential for the degradation of carbohydrates via glycolysis. The sequence is that of Enolase from Pyrococcus furiosus (strain ATCC 43587 / DSM 3638 / JCM 8422 / Vc1).